A 326-amino-acid polypeptide reads, in one-letter code: Beta-ketoacyl-[acyl-carrier-protein] synthase III (326 aa).

Catalysis depends on residues Cys-112 and His-251. An ACP-binding region spans residues 252–256 (QANSR). Asn-281 is a catalytic residue.

This sequence belongs to the thiolase-like superfamily. FabH family. In terms of assembly, homodimer.

Its subcellular location is the cytoplasm. It carries out the reaction malonyl-[ACP] + acetyl-CoA + H(+) = 3-oxobutanoyl-[ACP] + CO2 + CoA. The protein operates within lipid metabolism; fatty acid biosynthesis. Catalyzes the condensation reaction of fatty acid synthesis by the addition to an acyl acceptor of two carbons from malonyl-ACP. Catalyzes the first condensation reaction which initiates fatty acid synthesis and may therefore play a role in governing the total rate of fatty acid production. Possesses both acetoacetyl-ACP synthase and acetyl transacylase activities. Its substrate specificity determines the biosynthesis of branched-chain and/or straight-chain of fatty acids. This chain is Beta-ketoacyl-[acyl-carrier-protein] synthase III, found in Clostridium botulinum (strain 657 / Type Ba4).